The primary structure comprises 621 residues: Phosphomethylpyrimidine synthase (621 aa).

A compositionally biased stretch (low complexity) spans 1–23; it reads MTAPFLSSLSPTSPLASATAPFP. The segment at 1-29 is disordered; it reads MTAPFLSSLSPTSPLASATAPFPGSRKVY. Substrate is bound by residues Asn215, Met244, Tyr273, His309, 329-331, 370-373, and Glu409; these read SRG and DGLR. His413 lines the Zn(2+) pocket. A substrate-binding site is contributed by Tyr436. Residue His477 coordinates Zn(2+). Positions 557, 560, and 565 each coordinate [4Fe-4S] cluster.

The protein belongs to the ThiC family. In terms of assembly, homodimer. [4Fe-4S] cluster is required as a cofactor.

The catalysed reaction is 5-amino-1-(5-phospho-beta-D-ribosyl)imidazole + S-adenosyl-L-methionine = 4-amino-2-methyl-5-(phosphooxymethyl)pyrimidine + CO + 5'-deoxyadenosine + formate + L-methionine + 3 H(+). Its pathway is cofactor biosynthesis; thiamine diphosphate biosynthesis. Functionally, catalyzes the synthesis of the hydroxymethylpyrimidine phosphate (HMP-P) moiety of thiamine from aminoimidazole ribotide (AIR) in a radical S-adenosyl-L-methionine (SAM)-dependent reaction. This is Phosphomethylpyrimidine synthase from Rhodospirillum rubrum (strain ATCC 11170 / ATH 1.1.1 / DSM 467 / LMG 4362 / NCIMB 8255 / S1).